Reading from the N-terminus, the 513-residue chain is Xyloglucan 6-xylosyltransferase 4 (513 aa).

The Cytoplasmic segment spans residues 1–39 (MFQDGSRSSGSGRGLSTTAVSNGGWRTRGFLRGWQIQNT). The helical; Signal-anchor for type II membrane protein transmembrane segment at 40 to 60 (LFNNIKFMILCCFVTILILLG) threads the bilayer. Topologically, residues 61-513 (TIRVGNLGSS…IRRMHMETKP (453 aa)) are lumenal. 5 N-linked (GlcNAc...) asparagine glycosylation sites follow: Asn-76, Asn-110, Asn-142, Asn-174, and Asn-490.

Belongs to the glycosyltransferase 34 family.

It is found in the golgi apparatus membrane. The catalysed reaction is Transfers an alpha-D-xylosyl residue from UDP-D-xylose to a glucose residue in xyloglucan, forming an alpha-(1-&gt;6)-D-xylosyl-D-glucose linkage.. Functionally, xylosyltransferase specific to UDP-D-xylose that accepts cellohexaose as substrate to produce xyloglucan. This Arabidopsis thaliana (Mouse-ear cress) protein is Xyloglucan 6-xylosyltransferase 4.